Here is a 398-residue protein sequence, read N- to C-terminus: Dual-specificity RNA methyltransferase RlmN (398 aa).

Catalysis depends on E119, which acts as the Proton acceptor. The Radical SAM core domain maps to 125-364 (EADRATLCVS…TIVRKTRGDD (240 aa)). The cysteines at positions 132 and 369 are disulfide-linked. [4Fe-4S] cluster is bound by residues C139, C143, and C146. Residues 193–194 (GE), S225, 247–249 (SLH), and N326 each bind S-adenosyl-L-methionine. The S-methylcysteine intermediate role is filled by C369.

This sequence belongs to the radical SAM superfamily. RlmN family. Requires [4Fe-4S] cluster as cofactor.

The protein resides in the cytoplasm. The enzyme catalyses adenosine(2503) in 23S rRNA + 2 reduced [2Fe-2S]-[ferredoxin] + 2 S-adenosyl-L-methionine = 2-methyladenosine(2503) in 23S rRNA + 5'-deoxyadenosine + L-methionine + 2 oxidized [2Fe-2S]-[ferredoxin] + S-adenosyl-L-homocysteine. It catalyses the reaction adenosine(37) in tRNA + 2 reduced [2Fe-2S]-[ferredoxin] + 2 S-adenosyl-L-methionine = 2-methyladenosine(37) in tRNA + 5'-deoxyadenosine + L-methionine + 2 oxidized [2Fe-2S]-[ferredoxin] + S-adenosyl-L-homocysteine. Functionally, specifically methylates position 2 of adenine 2503 in 23S rRNA and position 2 of adenine 37 in tRNAs. m2A2503 modification seems to play a crucial role in the proofreading step occurring at the peptidyl transferase center and thus would serve to optimize ribosomal fidelity. The sequence is that of Dual-specificity RNA methyltransferase RlmN from Yersinia pseudotuberculosis serotype O:3 (strain YPIII).